We begin with the raw amino-acid sequence, 370 residues long: tRNA pseudouridine synthase D (370 aa).

Aspartate 77 (nucleophile) is an active-site residue. Residues glycine 152–leucine 297 enclose the TRUD domain.

This sequence belongs to the pseudouridine synthase TruD family.

It carries out the reaction uridine(13) in tRNA = pseudouridine(13) in tRNA. In terms of biological role, responsible for synthesis of pseudouridine from uracil-13 in transfer RNAs. The sequence is that of tRNA pseudouridine synthase D from Shewanella oneidensis (strain ATCC 700550 / JCM 31522 / CIP 106686 / LMG 19005 / NCIMB 14063 / MR-1).